Reading from the N-terminus, the 68-residue chain is Agnoprotein (68 aa).

Over 1-24 the chain is Cytoplasmic; that stretch reads MVLRQLSRQASVKVGKTWTGTKRR. A phosphoserine; by host mark is found at S7 and S11. Phosphothreonine; by host is present on T21. Residues 25–41 traverse the membrane as a helical; Signal-anchor for type II membrane protein segment; that stretch reads AQRIFIFILELLLDFCR. The Extracellular portion of the chain corresponds to 42–68; the sequence is GEDSVDGKKKKDSLTDKTETVTEKKES. Residues 44-68 form a disordered region; that stretch reads DSVDGKKKKDSLTDKTETVTEKKES.

The protein belongs to the polyomavirus agnoprotein family. Homooligomer. Interacts with VP1. Interacts with large T antigen; this interaction may impact upon the activity of T-antigen on the control of viral gene transcription and replication. Interacts with small t antigen. Interacts with host CBX5; this interaction induces the dissociation of CBX5 from LBR, resulting in destabilization of the nuclear envelope. Post-translationally, phosphorylated by host PKC. Phosphorylation alters the stability and may also have an impact on the subcellular location.

The protein resides in the host cytoplasm. It is found in the host nucleus membrane. Its subcellular location is the host rough endoplasmic reticulum membrane. It localises to the host cell membrane. Alters the structure of the nuclear envelope by interacting with host CBX5 and disrupting CBX5 association with LBR. Involved in the perinuclear-nuclear localization of the capsid protein VP1 during virion assembly and maturation. Plays an important role in the release of progeny virions from infected cells and in viral propagation, probably by acting as a viral ionic channel in the host plasma membrane. Allows influx of extracellular calcium ions in the host cell. May contribute to viral genome transcription and translation of viral late proteins. The polypeptide is Agnoprotein (Simian virus 12 (strain wt100) (SV-12)).